The chain runs to 476 residues: Stromelysin-2 (476 aa).

An N-terminal signal peptide occupies residues 1 to 17 (MEPLAILVLLCFPICSA). The propeptide at 18–99 (YPLHGAVRQD…PRCGVPDVGG (82 aa)) is activation peptide. The short motif at 90-97 (PRCGVPDV) is the Cysteine switch element. Zn(2+) is bound by residues C92, H168, D170, H183, H196, and H218. E219 is a catalytic residue. Zn(2+) is bound by residues H222 and H228. Hemopexin repeat units lie at residues 286–335 (PVKC…WPSL), 336–382 (PSGL…GFPP), 384–432 (VKKI…FPGI), and 433–476 (EPQV…WLLC). C289 and C476 form a disulfide bridge.

This sequence belongs to the peptidase M10A family. Zn(2+) serves as cofactor. Ca(2+) is required as a cofactor.

Its subcellular location is the secreted. The protein resides in the extracellular space. It is found in the extracellular matrix. The enzyme catalyses Similar to stromelysin 1, but action on collagen types III, IV and V is weak.. Its function is as follows. Can degrade fibronectin, gelatins of type I, III, IV, and V; weakly collagens III, IV, and V. Activates procollagenase. This Rattus norvegicus (Rat) protein is Stromelysin-2 (Mmp10).